Consider the following 223-residue polypeptide: Small ribosomal subunit protein uS3 (223 aa).

The region spanning 39–108 (IRKFVKKKGA…VILINIVEVK (70 aa)) is the KH type-2 domain.

The protein belongs to the universal ribosomal protein uS3 family. In terms of assembly, part of the 30S ribosomal subunit. Forms a tight complex with proteins S10 and S14.

In terms of biological role, binds the lower part of the 30S subunit head. Binds mRNA in the 70S ribosome, positioning it for translation. This chain is Small ribosomal subunit protein uS3, found in Clostridium kluyveri (strain NBRC 12016).